The sequence spans 207 residues: Cytidylate kinase (207 aa).

7-15 (GVAASGKSS) lines the ATP pocket.

This sequence belongs to the cytidylate kinase family. Type 1 subfamily.

The protein localises to the cytoplasm. It carries out the reaction CMP + ATP = CDP + ADP. The enzyme catalyses dCMP + ATP = dCDP + ADP. The chain is Cytidylate kinase from Deinococcus deserti (strain DSM 17065 / CIP 109153 / LMG 22923 / VCD115).